We begin with the raw amino-acid sequence, 384 residues long: S-adenosylmethionine synthase (384 aa).

His-15 is an ATP binding site. A Mg(2+)-binding site is contributed by Asp-17. Glu-43 contacts K(+). L-methionine is bound by residues Glu-56 and Gln-99. The interval 99-109 is flexible loop; sequence QSPDINQGVDR. ATP-binding positions include 164–166, 230–231, Asp-239, 245–246, Ala-262, and Lys-266; these read DAK, RF, and RK. Asp-239 lines the L-methionine pocket. An L-methionine-binding site is contributed by Lys-270.

It belongs to the AdoMet synthase family. As to quaternary structure, homotetramer; dimer of dimers. It depends on Mg(2+) as a cofactor. Requires K(+) as cofactor.

The protein resides in the cytoplasm. It catalyses the reaction L-methionine + ATP + H2O = S-adenosyl-L-methionine + phosphate + diphosphate. The protein operates within amino-acid biosynthesis; S-adenosyl-L-methionine biosynthesis; S-adenosyl-L-methionine from L-methionine: step 1/1. Catalyzes the formation of S-adenosylmethionine (AdoMet) from methionine and ATP. The overall synthetic reaction is composed of two sequential steps, AdoMet formation and the subsequent tripolyphosphate hydrolysis which occurs prior to release of AdoMet from the enzyme. The sequence is that of S-adenosylmethionine synthase from Escherichia coli (strain K12 / DH10B).